A 158-amino-acid polypeptide reads, in one-letter code: N-alpha-acetyltransferase RimI (158 aa).

The N-acetyltransferase domain occupies 8–155; sequence VTIGALTRAD…DAYTMRRDSG (148 aa).

The protein belongs to the acetyltransferase family. RimI subfamily. As to quaternary structure, monomer. Interacts with TsaD. Interacts with GroS/GroES.

It catalyses the reaction N-terminal L-methionyl-L-alanyl-[protein] + acetyl-CoA = N-terminal N(alpha)-acetyl-L-methionyl-L-alanyl-[protein] + CoA + H(+). The catalysed reaction is N-terminal L-methionyl-L-seryl-[protein] + acetyl-CoA = N-terminal N(alpha)-acetyl-L-methionyl-L-seryl-[protein] + CoA + H(+). It carries out the reaction N-terminal L-methionyl-L-valyl-[protein] + acetyl-CoA = N-terminal N(alpha)-acetyl-L-methionyl-L-valyl-[protein] + CoA + H(+). The enzyme catalyses N-terminal L-methionyl-L-threonyl-[protein] + acetyl-CoA = N-terminal N(alpha)-acetyl-L-methionyl-L-threonyl-[protein] + CoA + H(+). It catalyses the reaction N-terminal L-methionyl-L-lysyl-[protein] + acetyl-CoA = N-terminal N(alpha)-acetyl-L-methionyl-L-lysyl-[protein] + CoA + H(+). The catalysed reaction is N-terminal L-methionyl-L-leucyl-[protein] + acetyl-CoA = N-terminal N(alpha)-acetyl-L-methionyl-L-leucyl-[protein] + CoA + H(+). It carries out the reaction N-terminal L-methionyl-L-phenylalanyl-[protein] + acetyl-CoA = N-terminal N(alpha)-acetyl-L-methionyl-L-phenylalanyl-[protein] + CoA + H(+). The enzyme catalyses N-terminal L-methionyl-L-tyrosyl-[protein] + acetyl-CoA = N-terminal N(alpha)-acetyl-L-methionyl-L-tyrosyl-[protein] + CoA + H(+). It catalyses the reaction N-terminal glycyl-[protein] + acetyl-CoA = N-terminal N(alpha)-acetylglycyl-[protein] + CoA + H(+). The catalysed reaction is N-terminal L-alanyl-[protein] + acetyl-CoA = N-terminal N(alpha)-acetyl-L-alanyl-[protein] + CoA + H(+). It carries out the reaction N-terminal L-seryl-[protein] + acetyl-CoA = N-terminal N(alpha)-acetyl-L-seryl-[protein] + CoA + H(+). The enzyme catalyses N-terminal L-valyl-[protein] + acetyl-CoA = N-terminal N(alpha)-acetyl-L-valyl-[protein] + CoA + H(+). It catalyses the reaction N-terminal L-cysteinyl-[protein] + acetyl-CoA = N-terminal N(alpha)-acetyl-L-cysteinyl-[protein] + CoA + H(+). The catalysed reaction is N-terminal L-threonyl-[protein] + acetyl-CoA = N-terminal N(alpha)-acetyl-L-threonyl-[protein] + CoA + H(+). N-alpha-acetyltransferase that specifically mediates the acetylation of N-terminal residues. Able to mediate acetylation of a wide variety of N-terminal residues, with preference for hydrophobic N-termini. Acetylates GroS/GroES and GroEL1. Able to acetylate the ribosomal protein bS18, but it is unclear whether it acetylates its N-terminal alanine residue. In Mycobacterium tuberculosis (strain ATCC 25618 / H37Rv), this protein is N-alpha-acetyltransferase RimI.